We begin with the raw amino-acid sequence, 265 residues long: MLTFSFLTLFPELLAPFASEALVGKARARGLLDVQLVNMRDFAENKHLKVDDTPYGGGAGMVIRVDVVERALASLPPADEVILLTPAGERFTQQMAEELSRTTHLAFLCGRYEGFDARVERLATRELSLGDFVMMGGEAAAACVLEAVARLVPGVLGDEDSHRADSFSSGLLDYPEYTRPAEWRGEGVPEVLKGGNHAAVARWRREQALARTLARRPDLLPSAGLTPQDSAYLLTLGVTPEQLAAWGAPPPPLPKRRRGAKPNPN.

Residues G110 and 129–134 (LGDFVM) contribute to the S-adenosyl-L-methionine site. Residues 243 to 265 (LAAWGAPPPPLPKRRRGAKPNPN) form a disordered region. Over residues 254–265 (PKRRRGAKPNPN) the composition is skewed to basic residues.

It belongs to the RNA methyltransferase TrmD family. Homodimer.

It is found in the cytoplasm. It catalyses the reaction guanosine(37) in tRNA + S-adenosyl-L-methionine = N(1)-methylguanosine(37) in tRNA + S-adenosyl-L-homocysteine + H(+). In terms of biological role, specifically methylates guanosine-37 in various tRNAs. The protein is tRNA (guanine-N(1)-)-methyltransferase of Deinococcus geothermalis (strain DSM 11300 / CIP 105573 / AG-3a).